Consider the following 485-residue polypeptide: uncharacterized protein (485 aa).

The next 11 membrane-spanning stretches (helical) occupy residues 79–99, 117–137, 139–159, 170–190, 199–219, 275–295, 313–333, 355–375, 380–400, 421–441, and 448–468; these read LVTL…LIFA, VFAL…FLVF, FFSG…LADL, VIYF…SGFI, WEFW…FLLL, ILIC…LVLI, GLMY…AMPI, LPMG…FGWT, IFWF…IMTS, GVKI…ESLF, and WGCT…PILF.

The protein belongs to the major facilitator superfamily. CAR1 family.

The protein localises to the membrane. This is an uncharacterized protein from Schizosaccharomyces pombe (strain 972 / ATCC 24843) (Fission yeast).